Reading from the N-terminus, the 251-residue chain is Vitamin B12 import ATP-binding protein BtuD (251 aa).

One can recognise an ABC transporter domain in the interval 2–236 (IRVNSLQVDS…EVLQSVFGTS (235 aa)). An ATP-binding site is contributed by 30-37 (GPNGCGKS).

It belongs to the ABC transporter superfamily. Vitamin B12 importer (TC 3.A.1.13.1) family. The complex is composed of two ATP-binding proteins (BtuD), two transmembrane proteins (BtuC) and a solute-binding protein (BtuF).

It is found in the cell inner membrane. It carries out the reaction an R-cob(III)alamin(out) + ATP + H2O = an R-cob(III)alamin(in) + ADP + phosphate + H(+). In terms of biological role, part of the ABC transporter complex BtuCDF involved in vitamin B12 import. Responsible for energy coupling to the transport system. This is Vitamin B12 import ATP-binding protein BtuD from Vibrio cholerae serotype O1 (strain ATCC 39315 / El Tor Inaba N16961).